Here is a 525-residue protein sequence, read N- to C-terminus: Arabinose import ATP-binding protein AraG 2 (525 aa).

The segment at M1–A25 is disordered. Residues R7–A25 show a composition bias toward low complexity. ABC transporter domains are found at residues L35–R270 and R281–P524. G67–S74 is an ATP binding site.

This sequence belongs to the ABC transporter superfamily. Arabinose importer (TC 3.A.1.2.2) family. In terms of assembly, the complex is composed of two ATP-binding proteins (AraG), two transmembrane proteins (AraH) and a solute-binding protein (AraF).

It localises to the cell inner membrane. The catalysed reaction is L-arabinose(out) + ATP + H2O = L-arabinose(in) + ADP + phosphate + H(+). In terms of biological role, part of the ABC transporter complex AraFGH involved in arabinose import. Responsible for energy coupling to the transport system. This is Arabinose import ATP-binding protein AraG 2 from Burkholderia thailandensis (strain ATCC 700388 / DSM 13276 / CCUG 48851 / CIP 106301 / E264).